The following is a 750-amino-acid chain: NAD(P)H-quinone oxidoreductase subunit 5, chloroplastic (750 aa).

The next 16 helical transmembrane spans lie at 9–29, 39–59, 89–109, 125–145, 147–167, 185–205, 219–239, 267–287, 290–310, 327–347, 354–374, 396–416, 427–447, 554–574, 606–626, and 728–748; these read WIIPFIPFPVPMLIGVGLLLF, IWAFPSILLLTIVMFFSLDLS, IDSLTSIMSILITTVGILVLI, FAYMTLFNISMLGLVTSSNLI, IYFFWELIGMCSYLLIGFWFT, GDFGLLLGILGIYWITGSLEF, NEMNLFFVTLFALLLFCGSVA, ATMVAAGIFLVARLLPLFVLL, IMNTIAFIGLITVILGATLAI, LGYMMLALGMGSYRGALFHLI, ALLFLGSGSIIHSMEALVGYS, FFFLVGTLSLCGIPPFACFWS, YSPIVAIIACSAAALTAFYMF, FSMLVLVLFTLFVGAIGISFS, FFTNATFSLILTFWGIFIASF, and ILLYILDILIFILIYINFVFI.

It belongs to the complex I subunit 5 family. In terms of assembly, NDH is composed of at least 16 different subunits, 5 of which are encoded in the nucleus.

It localises to the plastid. It is found in the chloroplast thylakoid membrane. The enzyme catalyses a plastoquinone + NADH + (n+1) H(+)(in) = a plastoquinol + NAD(+) + n H(+)(out). It carries out the reaction a plastoquinone + NADPH + (n+1) H(+)(in) = a plastoquinol + NADP(+) + n H(+)(out). Functionally, NDH shuttles electrons from NAD(P)H:plastoquinone, via FMN and iron-sulfur (Fe-S) centers, to quinones in the photosynthetic chain and possibly in a chloroplast respiratory chain. The immediate electron acceptor for the enzyme in this species is believed to be plastoquinone. Couples the redox reaction to proton translocation, and thus conserves the redox energy in a proton gradient. This chain is NAD(P)H-quinone oxidoreductase subunit 5, chloroplastic (ndhF), found in Phaseolus vulgaris (Kidney bean).